The chain runs to 76 residues: Small ribosomal subunit protein bS18 (76 aa).

This sequence belongs to the bacterial ribosomal protein bS18 family. Part of the 30S ribosomal subunit. Forms a tight heterodimer with protein bS6.

Functionally, binds as a heterodimer with protein bS6 to the central domain of the 16S rRNA, where it helps stabilize the platform of the 30S subunit. This Azotobacter vinelandii (strain DJ / ATCC BAA-1303) protein is Small ribosomal subunit protein bS18.